The primary structure comprises 622 residues: Procollagen galactosyltransferase 1 (622 aa).

The signal sequence occupies residues 1–29; it reads MAAAPRAGRRRGQPLLALLLLLLAPLPPG. Residues Asn96, Asn184, and Asn381 are each glycosylated (N-linked (GlcNAc...) asparagine). Basic and acidic residues predominate over residues 588–606; that stretch reads RAKSQKMREQQALSREAKN. Residues 588-622 are disordered; that stretch reads RAKSQKMREQQALSREAKNSDVLQSPLDSAARDEL. The Endoplasmic reticulum retention motif signature appears at 619–622; it reads RDEL.

The protein belongs to the glycosyltransferase 25 family. N-glycosylated. As to expression, ubiquitous with higher levels in placenta, heart, lung and spleen.

It is found in the endoplasmic reticulum lumen. It carries out the reaction (5R)-5-hydroxy-L-lysyl-[collagen] + UDP-alpha-D-galactose = (5R)-5-O-(beta-D-galactosyl)-5-hydroxy-L-lysyl-[collagen] + UDP + H(+). In terms of biological role, beta-galactosyltransferase that transfers beta-galactose to hydroxylysine residues of type I collagen. By acting on collagen glycosylation, facilitates the formation of collagen triple helix. Also involved in the biosynthesis of collagen type IV. The chain is Procollagen galactosyltransferase 1 (COLGALT1) from Homo sapiens (Human).